A 317-amino-acid chain; its full sequence is Protoheme IX farnesyltransferase (317 aa).

A run of 9 helical transmembrane segments spans residues 43–63 (PISV…AGAT), 65–85 (PVSG…CAGA), 119–139 (ALYW…NLNP), 140–160 (IAWI…SLWL), 168–188 (IVIG…AVTG), 195–215 (VLIA…LAIF), 238–258 (LNWL…IYFV), 261–281 (WGLV…ALSV), and 292–312 (AWVL…SMMV).

Belongs to the UbiA prenyltransferase family. Protoheme IX farnesyltransferase subfamily. Interacts with CtaA.

Its subcellular location is the cell membrane. The catalysed reaction is heme b + (2E,6E)-farnesyl diphosphate + H2O = Fe(II)-heme o + diphosphate. The protein operates within porphyrin-containing compound metabolism; heme O biosynthesis; heme O from protoheme: step 1/1. Its function is as follows. Converts heme B (protoheme IX) to heme O by substitution of the vinyl group on carbon 2 of heme B porphyrin ring with a hydroxyethyl farnesyl side group. This is Protoheme IX farnesyltransferase from Desulforudis audaxviator (strain MP104C).